Consider the following 181-residue polypeptide: uncharacterized protein (181 aa).

This is an uncharacterized protein from Enterobacteria phage T4 (Bacteriophage T4).